The following is a 546-amino-acid chain: Chaperonin GroEL (546 aa).

Residues 30–33 (TLGP), K51, 87–91 (DGTTT), G415, 479–481 (NAA), and D495 contribute to the ATP site.

The protein belongs to the chaperonin (HSP60) family. As to quaternary structure, forms a cylinder of 14 subunits composed of two heptameric rings stacked back-to-back. Interacts with the co-chaperonin GroES.

The protein localises to the cytoplasm. It catalyses the reaction ATP + H2O + a folded polypeptide = ADP + phosphate + an unfolded polypeptide.. Together with its co-chaperonin GroES, plays an essential role in assisting protein folding. The GroEL-GroES system forms a nano-cage that allows encapsulation of the non-native substrate proteins and provides a physical environment optimized to promote and accelerate protein folding. The sequence is that of Chaperonin GroEL from Azotobacter vinelandii.